The primary structure comprises 78 residues: UPF0349 protein Sca_0544 (78 aa).

It belongs to the UPF0349 family.

The protein is UPF0349 protein Sca_0544 of Staphylococcus carnosus (strain TM300).